Consider the following 140-residue polypeptide: Protein SNA4 (140 aa).

Topologically, residues 1–8 (MCCYCVCC) are cytoplasmic. 5 S-palmitoyl cysteine lipidation sites follow: cysteine 2, cysteine 3, cysteine 5, cysteine 7, and cysteine 8. Residues 9–29 (TVSDFILYIVAFFFPPAAVLL) traverse the membrane as a helical segment. The Vacuolar segment spans residues 30–41 (RSGPCSSDFLLN). Residues 42–62 (VLLTLLGFLPGMLHAFYYITI) traverse the membrane as a helical segment. Over 63-140 (TSPLRNAEYV…LVESPPPYVP (78 aa)) the chain is Cytoplasmic. Residues 84-140 (RNVPSNRPQNSQTPQNRPQQGSSARNVYPSVETPLLQGAAPHDNKQSLVESPPPYVP) are disordered. The segment covering 85–108 (NVPSNRPQNSQTPQNRPQQGSSAR) has biased composition (polar residues). A Glycyl lysine isopeptide (Lys-Gly) (interchain with G-Cter in ubiquitin) cross-link involves residue lysine 128. Phosphoserine is present on serine 134.

It belongs to the UPF0057 (PMP3) family.

The protein localises to the vacuole membrane. In Saccharomyces cerevisiae (strain ATCC 204508 / S288c) (Baker's yeast), this protein is Protein SNA4 (SNA4).